Consider the following 529-residue polypeptide: Peptide chain release factor 3 (529 aa).

The tr-type G domain maps to 11 to 280 (AKRRTFAIIS…GLVEWAPAPM (270 aa)). GTP is bound by residues 20 to 27 (SHPDAGKT), 88 to 92 (DTPGH), and 142 to 145 (NKLD).

The protein belongs to the TRAFAC class translation factor GTPase superfamily. Classic translation factor GTPase family. PrfC subfamily.

It is found in the cytoplasm. Its function is as follows. Increases the formation of ribosomal termination complexes and stimulates activities of RF-1 and RF-2. It binds guanine nucleotides and has strong preference for UGA stop codons. It may interact directly with the ribosome. The stimulation of RF-1 and RF-2 is significantly reduced by GTP and GDP, but not by GMP. This is Peptide chain release factor 3 from Shigella sonnei (strain Ss046).